Reading from the N-terminus, the 193-residue chain is Ion-translocating oxidoreductase complex subunit A (193 aa).

Transmembrane regions (helical) follow at residues 5-25 (ILFFISNILIENFILVKFLGL), 47-67 (FVILTSSVLLWCVNFFILLPL), 72-92 (LRIIAYMLIVSVSVQFLEIVL), 102-122 (LLGIFLPLITTNCTVLAIPLF), 134-154 (IFYGLSASLGFALVMIIFSCI), and 167-187 (FQGAPIILITVSLISITFMGF).

It belongs to the NqrDE/RnfAE family. The complex is composed of six subunits: RnfA, RnfB, RnfC, RnfD, RnfE and RnfG.

Its subcellular location is the cell inner membrane. In terms of biological role, part of a membrane-bound complex that couples electron transfer with translocation of ions across the membrane. This chain is Ion-translocating oxidoreductase complex subunit A, found in Buchnera aphidicola subsp. Acyrthosiphon pisum (strain APS) (Acyrthosiphon pisum symbiotic bacterium).